Reading from the N-terminus, the 314-residue chain is GTP cyclohydrolase FolE2 (314 aa).

The segment at 290-314 (DASAWSAPQAAAPDQQESFATGNER) is disordered. A compositionally biased stretch (low complexity) spans 291-304 (ASAWSAPQAAAPDQ). The segment covering 305–314 (QESFATGNER) has biased composition (polar residues).

This sequence belongs to the GTP cyclohydrolase IV family.

The enzyme catalyses GTP + H2O = 7,8-dihydroneopterin 3'-triphosphate + formate + H(+). It participates in cofactor biosynthesis; 7,8-dihydroneopterin triphosphate biosynthesis; 7,8-dihydroneopterin triphosphate from GTP: step 1/1. Converts GTP to 7,8-dihydroneopterin triphosphate. This is GTP cyclohydrolase FolE2 from Pseudomonas putida (strain ATCC 47054 / DSM 6125 / CFBP 8728 / NCIMB 11950 / KT2440).